The following is a 683-amino-acid chain: MSTQNGMYYSLLEWFKTLNLNAPHANAEELADGVALAQALNQFAPESFSDSWLSKIKSSAAGSNWRLRMSNLKKVVEGVYEYYSDVLNYTLQHDFVKPDVQAIAEKCDLTELERLLQLVLGCAVNCAKKQSYICEIMCLEEELQANIMRALQELETSTRQTTEGGVVSSLSRNSLSGMLDGNAKALQSQMTEERDAMAQKCFETEKKMLLLIDEKTNLQQELQKIQQEFARLEHNTIGDDGVSLGPIQAGSVRYNELRRQLELVKEELLQSEGAREDLKIKAQQQETEMLHMQQRIDELMKSTAVLITLKDEVDVLRESTDKLKVCEAQLETYKKKLEEYNDLKKHVKMLEERSADYVQQNAQFEEDAKRYANTKGQIELFKKEIQDLHTKLDNESSKNVKLEFDNKNLDSKNLALQREKDNLLKERDNLREAFDELKCGQLTTNSGSLTGTTMSRELQPPAMMDKIQRLEAENKALREGQGGQTALAQLLDDANKRCENLREQMKTANERILSLSHASQSDDPILKENEFSKQIKQLMELNEQKTLQIEEFATQNSTMQCKITQLESSLNTREQEVMAYEVKYRKCVERAKEVIKNIDPRIASVLEANALEKSVDVIEEESKTKMSGMEEQLMATAFYRLGVNAQRDAVDSKLALLMGSGQTFLARQRQSAPRKSLTTMKSK.

The 119-residue stretch at 5–123 folds into the Calponin-homology (CH) domain; it reads NGMYYSLLEW…RLLQLVLGCA (119 aa). 2 coiled-coil regions span residues 135-440 and 484-594; these read EIMC…LKCG and QTAL…AKEV.

The protein belongs to the hook family. In terms of assembly, homodimer. Interacts with microtubules via its N-terminus.

It localises to the cytoplasm. The protein resides in the cytoskeleton. It is found in the endosome. The protein localises to the synapse. Functionally, involved in endocytic trafficking by stabilizing organelles of the endocytic pathway. Probably acts as a cytoskeletal linker protein required to tether endosome vesicles to the cytoskeleton. Involved in modulation of endocytosis at stages required for down-regulation of membrane proteins that control synapse size. Not involved in synaptic vesicle recycling. Required in R7 cells for boss endocytosis into multivesicular bodies (MVBs). Has a role in regulating adult longevity. The protein is Protein hook of Drosophila grimshawi (Hawaiian fruit fly).